Here is a 599-residue protein sequence, read N- to C-terminus: NADH-quinone oxidoreductase subunit C/D (599 aa).

A compositionally biased stretch (polar residues) spans 1–15 (MTDLTAQELAQPSWQ). The tract at residues 1-21 (MTDLTAQELAQPSWQTRDHQD) is disordered. Positions 1–189 (MTDLTAQELA…DPFELTKQKE (189 aa)) are NADH dehydrogenase I subunit C. The interval 213-599 (DFMFLNLGPN…IDFVMSDVDR (387 aa)) is NADH dehydrogenase I subunit D.

The protein in the N-terminal section; belongs to the complex I 30 kDa subunit family. It in the C-terminal section; belongs to the complex I 49 kDa subunit family. NDH-1 is composed of 13 different subunits. Subunits NuoB, CD, E, F, and G constitute the peripheral sector of the complex.

It localises to the cell inner membrane. It carries out the reaction a quinone + NADH + 5 H(+)(in) = a quinol + NAD(+) + 4 H(+)(out). Functionally, NDH-1 shuttles electrons from NADH, via FMN and iron-sulfur (Fe-S) centers, to quinones in the respiratory chain. The immediate electron acceptor for the enzyme in this species is believed to be ubiquinone. Couples the redox reaction to proton translocation (for every two electrons transferred, four hydrogen ions are translocated across the cytoplasmic membrane), and thus conserves the redox energy in a proton gradient. The protein is NADH-quinone oxidoreductase subunit C/D of Erwinia tasmaniensis (strain DSM 17950 / CFBP 7177 / CIP 109463 / NCPPB 4357 / Et1/99).